Reading from the N-terminus, the 440-residue chain is Transposon Ty1-DR1 Gag polyprotein (440 aa).

Composition is skewed to polar residues over residues 1 to 10, 48 to 60, and 127 to 152; these read MESQQLSNYP, TKANSQQTTTPAS, and QSQFPQYPSSVGTPLSTPSPESGNTF. Disordered regions lie at residues 1–93, 126–173, and 352–440; these read MESQ…MMTQ, PQSQ…RPPP, and GSRN…PGTY. Over residues 153–165 the composition is skewed to low complexity; it reads TDSSSADSDMTST. The segment at 299-401 is RNA-binding; sequence NNGIHINNKV…NSKSKTARAH (103 aa). A compositionally biased stretch (low complexity) spans 402-418; the sequence is NVSTSNNSPSTDNDSIS. Ser-416 carries the post-translational modification Phosphoserine. Polar residues predominate over residues 419–428; sequence KSTTEPIQLN. The segment covering 429–440 has biased composition (basic and acidic residues); it reads NKHDLHLRPGTY.

As to quaternary structure, homotrimer.

It is found in the cytoplasm. Its function is as follows. Capsid protein (CA) is the structural component of the virus-like particle (VLP), forming the shell that encapsulates the retrotransposons dimeric RNA genome. The particles are assembled from trimer-clustered units and there are holes in the capsid shells that allow for the diffusion of macromolecules. CA also has nucleocapsid-like chaperone activity, promoting primer tRNA(i)-Met annealing to the multipartite primer-binding site (PBS), dimerization of Ty1 RNA and initiation of reverse transcription. This is Transposon Ty1-DR1 Gag polyprotein (TY1A-DR1) from Saccharomyces cerevisiae (strain ATCC 204508 / S288c) (Baker's yeast).